A 479-amino-acid chain; its full sequence is Glutamyl-tRNA(Gln) amidotransferase subunit A (479 aa).

Catalysis depends on charge relay system residues Lys71 and Ser146. Residue Ser170 is the Acyl-ester intermediate of the active site.

This sequence belongs to the amidase family. GatA subfamily. As to quaternary structure, heterotrimer of A, B and C subunits.

It carries out the reaction L-glutamyl-tRNA(Gln) + L-glutamine + ATP + H2O = L-glutaminyl-tRNA(Gln) + L-glutamate + ADP + phosphate + H(+). Functionally, allows the formation of correctly charged Gln-tRNA(Gln) through the transamidation of misacylated Glu-tRNA(Gln) in organisms which lack glutaminyl-tRNA synthetase. The reaction takes place in the presence of glutamine and ATP through an activated gamma-phospho-Glu-tRNA(Gln). The sequence is that of Glutamyl-tRNA(Gln) amidotransferase subunit A from Lactobacillus gasseri (strain ATCC 33323 / DSM 20243 / BCRC 14619 / CIP 102991 / JCM 1131 / KCTC 3163 / NCIMB 11718 / NCTC 13722 / AM63).